The primary structure comprises 160 residues: Deoxyuridine 5'-triphosphate nucleotidohydrolase (160 aa).

Residues 79–81 (RSG), asparagine 92, 96–98 (TVD), and lysine 106 each bind substrate.

It belongs to the dUTPase family. Mg(2+) is required as a cofactor.

The enzyme catalyses dUTP + H2O = dUMP + diphosphate + H(+). It functions in the pathway pyrimidine metabolism; dUMP biosynthesis; dUMP from dCTP (dUTP route): step 2/2. In terms of biological role, this enzyme is involved in nucleotide metabolism: it produces dUMP, the immediate precursor of thymidine nucleotides and it decreases the intracellular concentration of dUTP so that uracil cannot be incorporated into DNA. This chain is Deoxyuridine 5'-triphosphate nucleotidohydrolase, found in Rhizobium meliloti (strain 1021) (Ensifer meliloti).